Here is a 199-residue protein sequence, read N- to C-terminus: Zinc finger matrin-type protein 2 (199 aa).

An N-acetylalanine modification is found at Ala-2. Residues Lys-8, Lys-36, Lys-39, Lys-45, Lys-55, Lys-61, Lys-64, Lys-70, Lys-102, and Lys-123 each participate in a glycyl lysine isopeptide (Lys-Gly) (interchain with G-Cter in SUMO2) cross-link. The disordered stretch occupies residues 27 to 46; the sequence is KRLTEEREKKDGKPVQPVKR. The Matrin-type zinc finger occupies 80–104; it reads YYCNVCDCVVKDSINFLDHINGKKH. A compositionally biased stretch (basic and acidic residues) spans 150-173; that stretch reads REEEEKAKAYKKEKQKEKKRRAEE. Positions 150–175 are disordered; sequence REEEEKAKAYKKEKQKEKKRRAEEDL.

Component of the spliceosome B complex.

It is found in the nucleus. In terms of biological role, involved in pre-mRNA splicing as a component of the spliceosome. The polypeptide is Zinc finger matrin-type protein 2 (ZMAT2) (Homo sapiens (Human)).